Consider the following 73-residue polypeptide: MKFLFLTLVLLYFTAILVFIVFPSYAQIQTNASCTTSTHCVEPCRKRCLLIHKCINDKCTCYPRINICEKKNN.

Positions Met1–Ala26 are cleaved as a signal peptide.

Belongs to the short scorpion toxin superfamily. Potassium channel inhibitor family. Alpha-KTx 27 subfamily. Post-translationally, contains 4 disulfide bonds. In terms of tissue distribution, expressed by the venom gland.

The protein resides in the secreted. The chain is Potassium channel toxin alpha-KTx 27.4 from Mesobuthus gibbosus (Mediterranean checkered scorpion).